The chain runs to 98 residues: Minor capsid protein P13 (98 aa).

Positions 3–23 are hydrophobic; sequence KITPFLIAAVVAVIVLAVWLF.

As to quaternary structure, interacts with the major capsid protein.

It is found in the virion. In terms of biological role, one of the minor capsid proteins that constitute a network internal to the major capsid proteins and outside the lipid membrane. The minor capsid protein P13 does not serve a cross-linking function between neighboring capsomers, it may play a role in the viral capsid assembly. The protein is Minor capsid protein P13 of Chlorella (PBCV-1).